The primary structure comprises 424 residues: Serine hydroxymethyltransferase (424 aa).

(6S)-5,6,7,8-tetrahydrofolate is bound by residues leucine 118 and 122 to 124; that span reads GHL. At lysine 227 the chain carries N6-(pyridoxal phosphate)lysine. Residues glutamate 243 and 351–353 each bind (6S)-5,6,7,8-tetrahydrofolate; that span reads SPF.

Belongs to the SHMT family. Homodimer. Requires pyridoxal 5'-phosphate as cofactor.

It is found in the cytoplasm. The catalysed reaction is (6R)-5,10-methylene-5,6,7,8-tetrahydrofolate + glycine + H2O = (6S)-5,6,7,8-tetrahydrofolate + L-serine. Its pathway is one-carbon metabolism; tetrahydrofolate interconversion. It functions in the pathway amino-acid biosynthesis; glycine biosynthesis; glycine from L-serine: step 1/1. In terms of biological role, catalyzes the reversible interconversion of serine and glycine with tetrahydrofolate (THF) serving as the one-carbon carrier. This reaction serves as the major source of one-carbon groups required for the biosynthesis of purines, thymidylate, methionine, and other important biomolecules. Also exhibits THF-independent aldolase activity toward beta-hydroxyamino acids, producing glycine and aldehydes, via a retro-aldol mechanism. The polypeptide is Serine hydroxymethyltransferase (Thermosipho africanus (strain TCF52B)).